The primary structure comprises 309 residues: Ribosomal RNA small subunit methyltransferase H (309 aa).

Residues 36 to 38, D55, F81, D102, and Q109 contribute to the S-adenosyl-L-methionine site; that span reads AGH.

Belongs to the methyltransferase superfamily. RsmH family.

It is found in the cytoplasm. It carries out the reaction cytidine(1402) in 16S rRNA + S-adenosyl-L-methionine = N(4)-methylcytidine(1402) in 16S rRNA + S-adenosyl-L-homocysteine + H(+). Specifically methylates the N4 position of cytidine in position 1402 (C1402) of 16S rRNA. This is Ribosomal RNA small subunit methyltransferase H from Mycoplasma genitalium (strain ATCC 33530 / DSM 19775 / NCTC 10195 / G37) (Mycoplasmoides genitalium).